The primary structure comprises 683 residues: MRQQQMRNIGIMAHVDAGKTTTTERMLFYTGKIHRMGEIDDGATTMDWMVQEQERGITIQSAATTVRWREVDITIIDTPGHVDFTAEVERALRVLDGVVVVLCAVGRVQPQTETVWYQADRYDIPRVCFVNKMDRIGADFFSVLDQVHNKFGIDAVALQIPIGSGTSFEGVIDLITMKEIFWDAASSGEQMEYRPIQSARIAQAREAREKMLDVISIYSDEVTECVLAGEHVPVQLLHAEIRKAVRERRYVPFLCGSSRHNLGVQPLLDAVVEYLPAPQERKAVEGFHVQKKEPVFIAPTAEGPLLALVFKIQYEREAGLLCYVRMYSGKLRTGDSIVNIGKKKRERVYRILRMHSNKSETVECIQAGDIAVIVGLKSAQTGDSVGDGSCPVVLESMHFPEPVISVSLEPMDASSRDKLQETLGILSREDPTFSVREDAETGQLLISGMGELHLDVLTTRMREDFNVQVRVGKPHVTYRESIRKTVERTLRVQRVIGGKEYMAGLTLRVEARKRGAGNEFFCQVKELRGTVCTAHTAPAEIIGAVEHAIRGAWDGGIQSGYPCVDVGVHLLSVEYQELTSSPFIFEAAAVQAFGEACVAAEPYVLEPIMSVELSCAQENVGDVMNVIIQRGGIILGMDSKHGRELVHAQAPMKKMFGFSTDVRSASRGGASFTMRFSHFESCA.

One can recognise a tr-type G domain in the interval 4–279 (QQMRNIGIMA…AVVEYLPAPQ (276 aa)). GTP is bound by residues 13-20 (AHVDAGKT), 77-81 (DTPGH), and 131-134 (NKMD).

The protein belongs to the TRAFAC class translation factor GTPase superfamily. Classic translation factor GTPase family. EF-G/EF-2 subfamily.

It is found in the cytoplasm. Catalyzes the GTP-dependent ribosomal translocation step during translation elongation. During this step, the ribosome changes from the pre-translocational (PRE) to the post-translocational (POST) state as the newly formed A-site-bound peptidyl-tRNA and P-site-bound deacylated tRNA move to the P and E sites, respectively. Catalyzes the coordinated movement of the two tRNA molecules, the mRNA and conformational changes in the ribosome. The chain is Elongation factor G 2 (fusB) from Treponema pallidum (strain Nichols).